A 201-amino-acid chain; its full sequence is Holliday junction branch migration complex subunit RuvA (201 aa).

The segment at 1–64 (MIGRLYGKII…EDAHLLFGFA (64 aa)) is domain I. The interval 65–143 (QKQDRTLFRE…GIAQTDFFVE (79 aa)) is domain II. The tract at residues 144–154 (HSHETMVATYE) is flexible linker. The tract at residues 154–201 (EIDASEEARDALLALGYKLTDAEKMIKKVHKSGATSEQLIRDALKASL) is domain III.

It belongs to the RuvA family. In terms of assembly, homotetramer. Forms an RuvA(8)-RuvB(12)-Holliday junction (HJ) complex. HJ DNA is sandwiched between 2 RuvA tetramers; dsDNA enters through RuvA and exits via RuvB. An RuvB hexamer assembles on each DNA strand where it exits the tetramer. Each RuvB hexamer is contacted by two RuvA subunits (via domain III) on 2 adjacent RuvB subunits; this complex drives branch migration. In the full resolvosome a probable DNA-RuvA(4)-RuvB(12)-RuvC(2) complex forms which resolves the HJ.

It localises to the cytoplasm. In terms of biological role, the RuvA-RuvB-RuvC complex processes Holliday junction (HJ) DNA during genetic recombination and DNA repair, while the RuvA-RuvB complex plays an important role in the rescue of blocked DNA replication forks via replication fork reversal (RFR). RuvA specifically binds to HJ cruciform DNA, conferring on it an open structure. The RuvB hexamer acts as an ATP-dependent pump, pulling dsDNA into and through the RuvAB complex. HJ branch migration allows RuvC to scan DNA until it finds its consensus sequence, where it cleaves and resolves the cruciform DNA. The sequence is that of Holliday junction branch migration complex subunit RuvA from Haemophilus ducreyi (strain 35000HP / ATCC 700724).